We begin with the raw amino-acid sequence, 81 residues long: MPNCYNNMTEFYLASYLQFASSGYHYTGTCALGKVVDPNTGLVYGFENLYVTDASVVPKTPRGNTQATTYVVSGKLSEKIF.

Belongs to the GMC oxidoreductase family.

The sequence is that of Putative truncated GMC-type inactive oxidoreductase R833 from Acanthamoeba polyphaga mimivirus (APMV).